The following is a 172-amino-acid chain: Shikimate kinase (172 aa).

11-16 (GSGKTT) provides a ligand contact to ATP. Residue T15 participates in Mg(2+) binding. 3 residues coordinate substrate: D33, R57, and G79. Residue R117 coordinates ATP. R136 provides a ligand contact to substrate.

Belongs to the shikimate kinase family. In terms of assembly, monomer. Mg(2+) serves as cofactor.

The protein localises to the cytoplasm. The catalysed reaction is shikimate + ATP = 3-phosphoshikimate + ADP + H(+). The protein operates within metabolic intermediate biosynthesis; chorismate biosynthesis; chorismate from D-erythrose 4-phosphate and phosphoenolpyruvate: step 5/7. In terms of biological role, catalyzes the specific phosphorylation of the 3-hydroxyl group of shikimic acid using ATP as a cosubstrate. This chain is Shikimate kinase, found in Caldicellulosiruptor bescii (strain ATCC BAA-1888 / DSM 6725 / KCTC 15123 / Z-1320) (Anaerocellum thermophilum).